A 383-amino-acid polypeptide reads, in one-letter code: MGLRAAHTGFVVLVLLQSCAAYKLICYYTSWSQYREGDGSCFPDAIDPFLCTHVIYSFANISNNEIDTWEWNDVTLYDTLNTLKNRNPNLKTLLSVGGWNFGSQRFSKIASKTQSRRTFIKSVPPFLRTHGFDGLDLAWLYPGWRDKRHLTTLVKEMKAEFVREAQAGTEQLLLSAAVPAGKIAIDRGYDIAQISRHLDFISLLTYDFHGAWRQTVGHHSPLFRGQEDASSDRFSNADYAVSYMLRLGAPANKLVMGIPTFGRSYTLASSKTDVGAPISGPGIPGQFTKEKGILAYYEICDFLHGATTHRFRDQQVPYATKGNQWVAYDDQESVKNKARYLKNRQLAGAMVWALDLDDFRGTFCGQNLTFPLTSAIKDVLARV.

Residues 1–21 (MGLRAAHTGFVVLVLLQSCAA) form the signal peptide. One can recognise a GH18 domain in the interval 22 to 383 (YKLICYYTSW…SAIKDVLARV (362 aa)). The cysteines at positions 26 and 51 are disulfide-linked. N-linked (GlcNAc...) asparagine glycosylation occurs at Asn-60. Chitin contacts are provided by residues 70–71 (EW), 97–100 (GGWN), Tyr-141, 204–207 (LTYD), and Arg-263. Cys-300 and Cys-364 are disulfide-bonded. The tract at residues 324–338 (QWVAYDDQESVKNKA) is important for AKT1 activation and IL8 production. Trp-352 is a chitin binding site. Asn-367 carries N-linked (GlcNAc...) asparagine glycosylation.

This sequence belongs to the glycosyl hydrolase 18 family. Monomer. In terms of processing, glycosylated. In terms of tissue distribution, mammary secretions collected during the non-lactating period.

The protein resides in the secreted. Its subcellular location is the extracellular space. It localises to the cytoplasm. The protein localises to the perinuclear region. It is found in the endoplasmic reticulum. In terms of biological role, carbohydrate-binding lectin with a preference for chitin. Has no chitinase activity. May play a role in tissue remodeling and in the capacity of cells to respond to and cope with changes in their environment. Plays a role in T-helper cell type 2 (Th2) inflammatory response and IL-13-induced inflammation, regulating allergen sensitization, inflammatory cell apoptosis, dendritic cell accumulation and M2 macrophage differentiation. Facilitates invasion of pathogenic enteric bacteria into colonic mucosa and lymphoid organs. Mediates activation of AKT1 signaling pathway and subsequent IL8 production in colonic epithelial cells. Regulates antibacterial responses in lung by contributing to macrophage bacterial killing, controlling bacterial dissemination and augmenting host tolerance. Also regulates hyperoxia-induced injury, inflammation and epithelial apoptosis in lung. The chain is Chitinase-3-like protein 1 (CHI3L1) from Bos taurus (Bovine).